We begin with the raw amino-acid sequence, 263 residues long: Transmembrane protein 176B (263 aa).

4 consecutive transmembrane segments (helical) span residues 61 to 81 (LGVT…CLYF), 89 to 109 (AFGC…GTIV), 121 to 141 (VSCL…VLGV), and 197 to 217 (LFLA…VVSV). Residues S231, S240, and S253 each carry the phosphoserine modification. The segment at 239-263 (ESERKLLDGHPAPASPAKEKIPAIL) is disordered.

This sequence belongs to the TMEM176 family. In terms of tissue distribution, ubiquitously expressed with higher expression in lung, liver, kidney and colon. Expressed in cerebellar granule cells.

The protein localises to the nucleus membrane. Functionally, may play a role in the process of maturation of dendritic cells. Required for the development of cerebellar granule cells. The sequence is that of Transmembrane protein 176B (Tmem176b) from Mus musculus (Mouse).